A 2324-amino-acid polypeptide reads, in one-letter code: Acetyl-CoA carboxylase (2324 aa).

An N-acetylmethionine modification is found at Met-1. Residues 1–34 (MEESSQPAKPLEMNPHSRFIIGSVSEDNSEDETS) form a disordered region. Ser-78 and Ser-80 each carry phosphoserine. A Biotin carboxylation domain is found at 117 to 618 (VIEKVLIANN…DTGWLDRLIA (502 aa)). The ATP-grasp domain occupies 275–466 (QKRILNVPQE…LPAAQLQIAM (192 aa)). 315–320 (GGGGKG) is a binding site for ATP. Mn(2+)-binding residues include Glu-424, Glu-437, and Asn-439. The active site involves Arg-441. The Biotinyl-binding domain occupies 745-819 (FEKENDPSIL…DPGCVIAKLQ (75 aa)). Position 786 is an N6-biotinyllysine (Lys-786). Ser-1193 is subject to Phosphoserine. The region spanning 1553 to 1891 (PYVTKDLLQS…SVYSPVPILK (339 aa)) is the CoA carboxyltransferase N-terminal domain. Positions 1553–2211 (PYVTKDLLQS…EDVVKKKIHD (659 aa)) are carboxyltransferase. Positions 1800, 2104, and 2106 each coordinate CoA. Residues 1895 to 2211 (PIDRTIDFVP…EDVVKKKIHD (317 aa)) form the CoA carboxyltransferase C-terminal domain.

The cofactor is biotin. It depends on Mn(2+) as a cofactor.

Its subcellular location is the cytoplasm. The enzyme catalyses hydrogencarbonate + acetyl-CoA + ATP = malonyl-CoA + ADP + phosphate + H(+). The catalysed reaction is N(6)-biotinyl-L-lysyl-[protein] + hydrogencarbonate + ATP = N(6)-carboxybiotinyl-L-lysyl-[protein] + ADP + phosphate + H(+). Its pathway is lipid metabolism; malonyl-CoA biosynthesis; malonyl-CoA from acetyl-CoA: step 1/1. Its activity is regulated as follows. By phosphorylation. Functionally, catalyzes the rate-limiting reaction in the biogenesis of long-chain fatty acids. Carries out three functions: biotin carboxyl carrier protein, biotin carboxylase and carboxyltransferase. The sequence is that of Acetyl-CoA carboxylase (ACAC) from Gallus gallus (Chicken).